The chain runs to 55 residues: Large ribosomal subunit protein bL33 (55 aa).

Belongs to the bacterial ribosomal protein bL33 family.

The sequence is that of Large ribosomal subunit protein bL33 from Brucella abortus (strain S19).